Here is a 542-residue protein sequence, read N- to C-terminus: Membrane protein insertase YidC (542 aa).

Helical transmembrane passes span 7 to 27 (LLVM…QQDF), 338 to 358 (FALL…IIGV), 417 to 437 (MGGC…YWTF), 455 to 475 (LSAQ…MFLL), and 494 to 514 (FMPV…VLYW).

Belongs to the OXA1/ALB3/YidC family. Type 1 subfamily. As to quaternary structure, interacts with the Sec translocase complex via SecD. Specifically interacts with transmembrane segments of nascent integral membrane proteins during membrane integration.

Its subcellular location is the cell inner membrane. Its function is as follows. Required for the insertion and/or proper folding and/or complex formation of integral membrane proteins into the membrane. Involved in integration of membrane proteins that insert both dependently and independently of the Sec translocase complex, as well as at least some lipoproteins. Aids folding of multispanning membrane proteins. The chain is Membrane protein insertase YidC from Actinobacillus pleuropneumoniae serotype 7 (strain AP76).